Reading from the N-terminus, the 223-residue chain is Cytotoxic T-lymphocyte protein 4 (223 aa).

Positions 1 to 35 are cleaved as a signal peptide; that stretch reads MAGFGFRRHGVQPDLASRTWPCTALFSLLFIPVFS. Residues 36–161 lie on the Extracellular side of the membrane; sequence KGMHAAQPAV…IDPEPCPDSD (126 aa). The 102-residue stretch at 39–140 folds into the Ig-like V-type domain; the sequence is HAAQPAVVLA…VELMYPPPYY (102 aa). The tract at residues 46–50 is homodimerization; sequence VLASS. Cystine bridges form between cysteine 58-cysteine 129 and cysteine 85-cysteine 103. Asparagine 113 carries N-linked (GlcNAc...) asparagine glycosylation. An important for interaction with CD80 and CD86 region spans residues 134-139; it reads MYPPPY. N-linked (GlcNAc...) asparagine glycosylation occurs at asparagine 145. A homodimerization region spans residues 150 to 155; that stretch reads YVIDPE. Residues 162 to 182 traverse the membrane as a helical segment; the sequence is FLLWILAAVSSGLFFYSFLIT. At 183–223 the chain is on the cytoplasmic side; the sequence is AVSLSKMLKKRSPLTTGVYVKMPPTGPECEKQFQPYFIPIN. Tyrosine 201 carries the phosphotyrosine; by TXK and JAK2 modification.

Homodimer; disulfide-linked. Binds to CD80/B7-1 and CD86/B7.2. Interacts with ICOSLG. In terms of processing, N-glycosylation is important for dimerization. Post-translationally, phosphorylation at Tyr-201 prevents binding to the AP-2 adapter complex, blocks endocytosis, and leads to retention of CTLA4 on the cell surface.

It localises to the cell membrane. Functionally, inhibitory receptor acting as a major negative regulator of T-cell responses. The affinity of CTLA4 for its natural B7 family ligands, CD80 and CD86, is considerably stronger than the affinity of their cognate stimulatory coreceptor CD28. This is Cytotoxic T-lymphocyte protein 4 (CTLA4) from Canis lupus familiaris (Dog).